The primary structure comprises 74 residues: Conotoxin VnMEKL-0221 (74 aa).

Residues 1–19 (MEKLTILLLVAAVLMWTQA) form the signal peptide. Positions 20-46 (LIQEKRPKEKIKFLSKRKTTAESWWEG) are excised as a propeptide. Disulfide bonds link C48–C62, C55–C66, and C61–C71.

The protein belongs to the conotoxin O2 superfamily. Expressed by the venom duct.

It localises to the secreted. This Conus ventricosus (Mediterranean cone) protein is Conotoxin VnMEKL-0221.